A 100-amino-acid chain; its full sequence is Pancreatic trypsin inhibitor (100 aa).

The N-terminal stretch at 1–21 (MKMSRLCLSVALLVLLGTLAA) is a signal peptide. Residues 22–35 (STPGCDTSNQAKAQ) constitute a propeptide that is removed on maturation. A BPTI/Kunitz inhibitor domain is found at 40-90 (CLEPPYTGPCKARIIRYFYNAKAGLCQTFVYGGCRAKRNNFKSAEDCMRTC). Cystine bridges form between cysteine 40-cysteine 90, cysteine 49-cysteine 73, and cysteine 65-cysteine 86. Residues 94 to 100 (IGPWENL) constitute a propeptide that is removed on maturation.

The protein localises to the secreted. In terms of biological role, inhibits trypsin, kallikrein, chymotrypsin, and plasmin. The chain is Pancreatic trypsin inhibitor from Bos taurus (Bovine).